The following is a 457-amino-acid chain: Probable ECA polymerase (457 aa).

11 helical membrane-spanning segments follow: residues 3-23 (LLQF…ILTL), 41-61 (MLFL…VFGF), 65-85 (VVPA…YAIY), 118-138 (IMAL…GFLL), 154-174 (GVAL…VYFL), 181-201 (WLLF…IVGG), 206-226 (IIIA…ITLW), 227-247 (MLAL…LKRY), 340-360 (LVVM…GLII), 377-397 (YKAA…IVLA), and 408-428 (VVFF…LYWL).

This sequence belongs to the WzyE family. As to quaternary structure, probably part of a complex composed of WzxE, WzyE and WzzE.

The protein localises to the cell inner membrane. It participates in bacterial outer membrane biogenesis; enterobacterial common antigen biosynthesis. In terms of biological role, probably involved in the polymerization of enterobacterial common antigen (ECA) trisaccharide repeat units. The chain is Probable ECA polymerase from Erwinia tasmaniensis (strain DSM 17950 / CFBP 7177 / CIP 109463 / NCPPB 4357 / Et1/99).